A 419-amino-acid polypeptide reads, in one-letter code: Farnesyl pyrophosphate synthase (419 aa).

M1 bears the N-acetylmethionine mark. Residues K123, R126, and Q162 each coordinate isopentenyl diphosphate. K123 is modified (N6-(2-hydroxyisobutyryl)lysine; alternate). Residue K123 is modified to N6-acetyllysine; alternate. D169 and D173 together coordinate Mg(2+). R178 contributes to the dimethylallyl diphosphate binding site. An isopentenyl diphosphate-binding site is contributed by R179. Residues K266, T267, Q306, K323, and K332 each contribute to the dimethylallyl diphosphate site. K353 is subject to N6-acetyllysine.

It belongs to the FPP/GGPP synthase family. As to quaternary structure, homodimer. Interacts with RSAD2. In terms of assembly, (Microbial infection) Interacts with HTLV-1 protein p13(II). It depends on Mg(2+) as a cofactor.

Its subcellular location is the cytoplasm. It catalyses the reaction isopentenyl diphosphate + dimethylallyl diphosphate = (2E)-geranyl diphosphate + diphosphate. The catalysed reaction is isopentenyl diphosphate + (2E)-geranyl diphosphate = (2E,6E)-farnesyl diphosphate + diphosphate. Its pathway is isoprenoid biosynthesis; farnesyl diphosphate biosynthesis; farnesyl diphosphate from geranyl diphosphate and isopentenyl diphosphate: step 1/1. The protein operates within isoprenoid biosynthesis; geranyl diphosphate biosynthesis; geranyl diphosphate from dimethylallyl diphosphate and isopentenyl diphosphate: step 1/1. Its activity is regulated as follows. Inactivated by interferon-induced RSAD2. This inactivation may result of disruption of lipid rafts at the plasma membrane, and thus have an antiviral effect since many enveloped viruses need lipid rafts to bud efficiently out of the cell. Functionally, key enzyme in isoprenoid biosynthesis which catalyzes the formation of farnesyl diphosphate (FPP), a precursor for several classes of essential metabolites including sterols, dolichols, carotenoids, and ubiquinones. FPP also serves as substrate for protein farnesylation and geranylgeranylation. Catalyzes the sequential condensation of isopentenyl pyrophosphate with the allylic pyrophosphates, dimethylallyl pyrophosphate, and then with the resultant geranylpyrophosphate to the ultimate product farnesyl pyrophosphate. This is Farnesyl pyrophosphate synthase from Homo sapiens (Human).